Consider the following 67-residue polypeptide: MPQQFEQPQAQQAATQEDDALATTQAAAQTESADQADVLDDILDDIESTLETNAEEYVNSFVQKGGE.

The segment at 1–36 (MPQQFEQPQAQQAATQEDDALATTQAAAQTESADQA) is disordered. Positions 23–61 (TTQAAAQTESADQADVLDDILDDIESTLETNAEEYVNSF) are ARC ATPase binding. Residue Glu67 forms an Isoglutamyl lysine isopeptide (Glu-Lys) (interchain with K-? in acceptor proteins) linkage.

The protein belongs to the prokaryotic ubiquitin-like protein family. Strongly interacts with the proteasome-associated ATPase ARC through a hydrophobic interface; the interacting region of Pup lies in its C-terminal half. There is one Pup binding site per ARC hexamer ring.

It participates in protein degradation; proteasomal Pup-dependent pathway. In terms of biological role, protein modifier that is covalently attached to lysine residues of substrate proteins, thereby targeting them for proteasomal degradation. The tagging system is termed pupylation. This chain is Prokaryotic ubiquitin-like protein Pup, found in Bifidobacterium longum (strain DJO10A).